A 130-amino-acid polypeptide reads, in one-letter code: Large ribosomal subunit protein bL12 (130 aa).

This sequence belongs to the bacterial ribosomal protein bL12 family. In terms of assembly, homodimer. Part of the ribosomal stalk of the 50S ribosomal subunit. Forms a multimeric L10(L12)X complex, where L10 forms an elongated spine to which 2 to 4 L12 dimers bind in a sequential fashion. Binds GTP-bound translation factors.

Forms part of the ribosomal stalk which helps the ribosome interact with GTP-bound translation factors. Is thus essential for accurate translation. The polypeptide is Large ribosomal subunit protein bL12 (Parafrankia sp. (strain EAN1pec)).